The chain runs to 134 residues: Small ribosomal subunit protein uS11 (134 aa).

2 disordered regions span residues 1-22 and 114-134; these read MPPK…KNVA and SIQD…RRRV. The segment covering 9 to 22 has biased composition (basic residues); that stretch reads AAKKVRRKEKKNVA.

It belongs to the universal ribosomal protein uS11 family. In terms of assembly, part of the 30S ribosomal subunit. Interacts with proteins S7 and S18. Binds to IF-3.

Functionally, located on the platform of the 30S subunit, it bridges several disparate RNA helices of the 16S rRNA. Forms part of the Shine-Dalgarno cleft in the 70S ribosome. The chain is Small ribosomal subunit protein uS11 from Streptomyces avermitilis (strain ATCC 31267 / DSM 46492 / JCM 5070 / NBRC 14893 / NCIMB 12804 / NRRL 8165 / MA-4680).